The sequence spans 271 residues: 3-methyl-2-oxobutanoate hydroxymethyltransferase (271 aa).

Residues Asp-53 and Asp-92 each coordinate Mg(2+). Residues 53–54, Asp-92, and Lys-120 contribute to the 3-methyl-2-oxobutanoate site; that span reads DS. Mg(2+) is bound at residue Glu-122. The active-site Proton acceptor is the Glu-189.

This sequence belongs to the PanB family. In terms of assembly, homodecamer; pentamer of dimers. The cofactor is Mg(2+).

Its subcellular location is the cytoplasm. It carries out the reaction 3-methyl-2-oxobutanoate + (6R)-5,10-methylene-5,6,7,8-tetrahydrofolate + H2O = 2-dehydropantoate + (6S)-5,6,7,8-tetrahydrofolate. It participates in cofactor biosynthesis; (R)-pantothenate biosynthesis; (R)-pantoate from 3-methyl-2-oxobutanoate: step 1/2. Functionally, catalyzes the reversible reaction in which hydroxymethyl group from 5,10-methylenetetrahydrofolate is transferred onto alpha-ketoisovalerate to form ketopantoate. The polypeptide is 3-methyl-2-oxobutanoate hydroxymethyltransferase (Burkholderia mallei (strain NCTC 10247)).